The sequence spans 213 residues: Glycerol-3-phosphate acyltransferase (213 aa).

6 consecutive transmembrane segments (helical) span residues 2–22, 52–74, 81–100, 112–132, 143–163, and 164–184; these read ITIV…GLWI, AGMA…PIIF, PLIF…FAGF, VIFG…FGAL, VTAS…GFIL, and SNYD…IIIR.

Belongs to the PlsY family. In terms of assembly, probably interacts with PlsX.

It is found in the cell membrane. The enzyme catalyses an acyl phosphate + sn-glycerol 3-phosphate = a 1-acyl-sn-glycero-3-phosphate + phosphate. Its pathway is lipid metabolism; phospholipid metabolism. Its function is as follows. Catalyzes the transfer of an acyl group from acyl-phosphate (acyl-PO(4)) to glycerol-3-phosphate (G3P) to form lysophosphatidic acid (LPA). This enzyme utilizes acyl-phosphate as fatty acyl donor, but not acyl-CoA or acyl-ACP. This chain is Glycerol-3-phosphate acyltransferase, found in Streptococcus pneumoniae (strain CGSP14).